We begin with the raw amino-acid sequence, 723 residues long: Catalase-peroxidase (723 aa).

Residues 96 to 224 constitute a cross-link (tryptophyl-tyrosyl-methioninium (Trp-Tyr) (with M-250)); that stretch reads WHAAGTYRIQ…LAAVQMGLIY (129 aa). Histidine 97 functions as the Proton acceptor in the catalytic mechanism. The tryptophyl-tyrosyl-methioninium (Tyr-Met) (with W-96) cross-link spans 224–250; sequence YVNPEGVNSQPDPIKTGEQVRVTFARM. Heme b is bound at residue histidine 265.

It belongs to the peroxidase family. Peroxidase/catalase subfamily. As to quaternary structure, homodimer or homotetramer. It depends on heme b as a cofactor. In terms of processing, formation of the three residue Trp-Tyr-Met cross-link is important for the catalase, but not the peroxidase activity of the enzyme.

The catalysed reaction is H2O2 + AH2 = A + 2 H2O. It catalyses the reaction 2 H2O2 = O2 + 2 H2O. Functionally, bifunctional enzyme with both catalase and broad-spectrum peroxidase activity. This chain is Catalase-peroxidase, found in Marinobacter nauticus (strain ATCC 700491 / DSM 11845 / VT8) (Marinobacter aquaeolei).